A 210-amino-acid chain; its full sequence is Thiamine-phosphate synthase (210 aa).

Residues 36–40 (QLRIK) and Asn68 contribute to the 4-amino-2-methyl-5-(diphosphooxymethyl)pyrimidine site. Positions 69 and 88 each coordinate Mg(2+). Residue Ser107 coordinates 4-amino-2-methyl-5-(diphosphooxymethyl)pyrimidine. A 2-[(2R,5Z)-2-carboxy-4-methylthiazol-5(2H)-ylidene]ethyl phosphate-binding site is contributed by 133–135 (TQT). Lys136 provides a ligand contact to 4-amino-2-methyl-5-(diphosphooxymethyl)pyrimidine. Residues Gly165 and 185 to 186 (VS) contribute to the 2-[(2R,5Z)-2-carboxy-4-methylthiazol-5(2H)-ylidene]ethyl phosphate site.

The protein belongs to the thiamine-phosphate synthase family. Mg(2+) serves as cofactor.

It carries out the reaction 2-[(2R,5Z)-2-carboxy-4-methylthiazol-5(2H)-ylidene]ethyl phosphate + 4-amino-2-methyl-5-(diphosphooxymethyl)pyrimidine + 2 H(+) = thiamine phosphate + CO2 + diphosphate. The catalysed reaction is 2-(2-carboxy-4-methylthiazol-5-yl)ethyl phosphate + 4-amino-2-methyl-5-(diphosphooxymethyl)pyrimidine + 2 H(+) = thiamine phosphate + CO2 + diphosphate. It catalyses the reaction 4-methyl-5-(2-phosphooxyethyl)-thiazole + 4-amino-2-methyl-5-(diphosphooxymethyl)pyrimidine + H(+) = thiamine phosphate + diphosphate. It functions in the pathway cofactor biosynthesis; thiamine diphosphate biosynthesis; thiamine phosphate from 4-amino-2-methyl-5-diphosphomethylpyrimidine and 4-methyl-5-(2-phosphoethyl)-thiazole: step 1/1. In terms of biological role, condenses 4-methyl-5-(beta-hydroxyethyl)thiazole monophosphate (THZ-P) and 2-methyl-4-amino-5-hydroxymethyl pyrimidine pyrophosphate (HMP-PP) to form thiamine monophosphate (TMP). The sequence is that of Thiamine-phosphate synthase from Cronobacter sakazakii (strain ATCC BAA-894) (Enterobacter sakazakii).